The following is a 425-amino-acid chain: UDP-N-acetylglucosamine 1-carboxyvinyltransferase (425 aa).

22 to 23 (KN) lines the phosphoenolpyruvate pocket. Arg-93 lines the UDP-N-acetyl-alpha-D-glucosamine pocket. Cys-117 functions as the Proton donor in the catalytic mechanism. Cys-117 is modified (2-(S-cysteinyl)pyruvic acid O-phosphothioketal). UDP-N-acetyl-alpha-D-glucosamine contacts are provided by residues 122 to 126 (RPIDL), Asp-307, and Val-329.

The protein belongs to the EPSP synthase family. MurA subfamily.

The protein localises to the cytoplasm. The enzyme catalyses phosphoenolpyruvate + UDP-N-acetyl-alpha-D-glucosamine = UDP-N-acetyl-3-O-(1-carboxyvinyl)-alpha-D-glucosamine + phosphate. Its pathway is cell wall biogenesis; peptidoglycan biosynthesis. In terms of biological role, cell wall formation. Adds enolpyruvyl to UDP-N-acetylglucosamine. The protein is UDP-N-acetylglucosamine 1-carboxyvinyltransferase of Prosthecochloris aestuarii (strain DSM 271 / SK 413).